We begin with the raw amino-acid sequence, 235 residues long: Cytochrome c oxidase subunit 2 (235 aa).

At 1-14 (MPYPMQLGFQDATS) the chain is on the mitochondrial intermembrane side. A helical transmembrane segment spans residues 15-45 (PIMEELMYFHDHTLMIVFLISSLVLYIIILM). Residues 46 to 59 (LTTKLTHTSTMDAQ) are Mitochondrial matrix-facing. Residues 60 to 87 (EVETIWTILPAVILILIALPSLRILYMM) traverse the membrane as a helical segment. The Mitochondrial intermembrane portion of the chain corresponds to 88–235 (DEIYNPYLTV…MQSFLSYLYI (148 aa)). The Cu cation site is built by His-161, Cys-196, Glu-198, Cys-200, His-204, and Met-207. Residue Glu-198 coordinates Mg(2+). Position 218 is a phosphotyrosine (Tyr-218).

It belongs to the cytochrome c oxidase subunit 2 family. In terms of assembly, component of the cytochrome c oxidase (complex IV, CIV), a multisubunit enzyme composed of 14 subunits. The complex is composed of a catalytic core of 3 subunits MT-CO1, MT-CO2 and MT-CO3, encoded in the mitochondrial DNA, and 11 supernumerary subunits COX4I, COX5A, COX5B, COX6A, COX6B, COX6C, COX7A, COX7B, COX7C, COX8 and NDUFA4, which are encoded in the nuclear genome. The complex exists as a monomer or a dimer and forms supercomplexes (SCs) in the inner mitochondrial membrane with NADH-ubiquinone oxidoreductase (complex I, CI) and ubiquinol-cytochrome c oxidoreductase (cytochrome b-c1 complex, complex III, CIII), resulting in different assemblies (supercomplex SCI(1)III(2)IV(1) and megacomplex MCI(2)III(2)IV(2)). Found in a complex with TMEM177, COA6, COX18, COX20, SCO1 and SCO2. Interacts with TMEM177 in a COX20-dependent manner. Interacts with COX20. Interacts with COX16. Cu cation is required as a cofactor.

It localises to the mitochondrion inner membrane. It carries out the reaction 4 Fe(II)-[cytochrome c] + O2 + 8 H(+)(in) = 4 Fe(III)-[cytochrome c] + 2 H2O + 4 H(+)(out). Functionally, component of the cytochrome c oxidase, the last enzyme in the mitochondrial electron transport chain which drives oxidative phosphorylation. The respiratory chain contains 3 multisubunit complexes succinate dehydrogenase (complex II, CII), ubiquinol-cytochrome c oxidoreductase (cytochrome b-c1 complex, complex III, CIII) and cytochrome c oxidase (complex IV, CIV), that cooperate to transfer electrons derived from NADH and succinate to molecular oxygen, creating an electrochemical gradient over the inner membrane that drives transmembrane transport and the ATP synthase. Cytochrome c oxidase is the component of the respiratory chain that catalyzes the reduction of oxygen to water. Electrons originating from reduced cytochrome c in the intermembrane space (IMS) are transferred via the dinuclear copper A center (CU(A)) of subunit 2 and heme A of subunit 1 to the active site in subunit 1, a binuclear center (BNC) formed by heme A3 and copper B (CU(B)). The BNC reduces molecular oxygen to 2 water molecules using 4 electrons from cytochrome c in the IMS and 4 protons from the mitochondrial matrix. This chain is Cytochrome c oxidase subunit 2 (MT-CO2), found in Didelphis virginiana (North American opossum).